Consider the following 311-residue polypeptide: MAKELIFGHQNPDTDAIGTAIAYSYLQNKLGYDTEAVALGEANDETKYALNKFGFTAPRVIKTASNEVDAVMLVDHNEPQQSVSDIDKVKVTHVVDHHRIMNFNTADPLYYRAAPVGCTSTIMWQMYNEKEIEIPQDIAGIMLSAIISDTLLLKSPTTTDQDKEAVEALANIAGVNYKEYGLKMLKAGTNIADKSEEDLIDLDAKSFELNGSNVRVAQINVVDLPEALERKEAFLKAMDEASKSEGYDMFMLLITNILDSDSEALVVGSDESKAKFEKAFNTKLSDSEVKLPGVVSRKKQVVPPLTNAFEA.

Positions 9, 13, 15, 75, 97, and 149 each coordinate Mn(2+).

It belongs to the PPase class C family. Mn(2+) is required as a cofactor.

It localises to the cytoplasm. It catalyses the reaction diphosphate + H2O = 2 phosphate + H(+). This is Probable manganese-dependent inorganic pyrophosphatase from Lactobacillus gasseri (strain ATCC 33323 / DSM 20243 / BCRC 14619 / CIP 102991 / JCM 1131 / KCTC 3163 / NCIMB 11718 / NCTC 13722 / AM63).